Reading from the N-terminus, the 546-residue chain is Chaperonin GroEL (546 aa).

Residues 29 to 32 (TMGP), lysine 50, 86 to 90 (DGTTT), glycine 414, and aspartate 492 each bind ATP.

This sequence belongs to the chaperonin (HSP60) family. Forms a cylinder of 14 subunits composed of two heptameric rings stacked back-to-back. Interacts with the co-chaperonin GroES.

It is found in the cytoplasm. The enzyme catalyses ATP + H2O + a folded polypeptide = ADP + phosphate + an unfolded polypeptide.. Together with its co-chaperonin GroES, plays an essential role in assisting protein folding. The GroEL-GroES system forms a nano-cage that allows encapsulation of the non-native substrate proteins and provides a physical environment optimized to promote and accelerate protein folding. This chain is Chaperonin GroEL, found in Helicobacter pylori (strain Shi470).